Reading from the N-terminus, the 876-residue chain is Alanine--tRNA ligase (876 aa).

The Zn(2+) site is built by His-562, His-566, Cys-666, and His-670.

The protein belongs to the class-II aminoacyl-tRNA synthetase family. It depends on Zn(2+) as a cofactor.

Its subcellular location is the cytoplasm. It catalyses the reaction tRNA(Ala) + L-alanine + ATP = L-alanyl-tRNA(Ala) + AMP + diphosphate. Functionally, catalyzes the attachment of alanine to tRNA(Ala) in a two-step reaction: alanine is first activated by ATP to form Ala-AMP and then transferred to the acceptor end of tRNA(Ala). Also edits incorrectly charged Ser-tRNA(Ala) and Gly-tRNA(Ala) via its editing domain. The protein is Alanine--tRNA ligase of Hahella chejuensis (strain KCTC 2396).